An 819-amino-acid polypeptide reads, in one-letter code: Leucine--tRNA ligase (819 aa).

A 'HIGH' region motif is present at residues 36 to 46; sequence PYPSGKIHMGH. The short motif at 586 to 590 is the 'KMSKS' region element; that stretch reads KMSKS. Lysine 589 is a binding site for ATP.

Belongs to the class-I aminoacyl-tRNA synthetase family.

It localises to the cytoplasm. The catalysed reaction is tRNA(Leu) + L-leucine + ATP = L-leucyl-tRNA(Leu) + AMP + diphosphate. The polypeptide is Leucine--tRNA ligase (Wolbachia pipientis subsp. Culex pipiens (strain wPip)).